We begin with the raw amino-acid sequence, 239 residues long: Sugar fermentation stimulation protein homolog (239 aa).

This sequence belongs to the SfsA family.

The protein is Sugar fermentation stimulation protein homolog of Caulobacter vibrioides (strain ATCC 19089 / CIP 103742 / CB 15) (Caulobacter crescentus).